Reading from the N-terminus, the 160-residue chain is MAGNYHSFQNPIPRYQNYNFGSSSSNHQHEHDGLVVVVEDQQQEESMMVKEQDRLLPIANVGRIMKNILPANAKVSKEAKETMQECVSEFISFVTGEASDKCHKEKRKTVNGDDICWAMANLGFDDYAAQLKKYLHRYRVLEGEKPNHHGKGGPKSSPDN.

A DNA-binding region spans residues 56–62 (LPIANVG). The tract at residues 83 to 94 (MQECVSEFISFV) is subunit association domain (SAD).

It belongs to the NFYB/HAP3 subunit family. Heterotrimeric transcription factor composed of three components, NF-YA, NF-YB and NF-YC. NF-YB and NF-YC must interact and dimerize for NF-YA association and DNA binding. In terms of tissue distribution, expressed in flowers and siliques.

It is found in the nucleus. Component of the NF-Y/HAP transcription factor complex. The NF-Y complex stimulates the transcription of various genes by recognizing and binding to a CCAAT motif in promoters. In Arabidopsis thaliana (Mouse-ear cress), this protein is Nuclear transcription factor Y subunit B-5 (NFYB5).